A 266-amino-acid polypeptide reads, in one-letter code: Hemin import ATP-binding protein HmuV (266 aa).

One can recognise an ABC transporter domain in the interval 12–248 (LEANQLSYHV…ETLTRWYQAD (237 aa)). ATP is bound at residue 44-51 (GPNGAGKS).

Belongs to the ABC transporter superfamily. Heme (hemin) importer (TC 3.A.1.14.5) family. The complex is composed of two ATP-binding proteins (HmuV), two transmembrane proteins (HmuU) and a solute-binding protein (HmuT).

The protein localises to the cell inner membrane. Its function is as follows. Part of the ABC transporter complex HmuTUV involved in hemin import. Responsible for energy coupling to the transport system. The protein is Hemin import ATP-binding protein HmuV of Yersinia enterocolitica.